Reading from the N-terminus, the 1032-residue chain is Error-prone DNA polymerase (1032 aa).

Belongs to the DNA polymerase type-C family. DnaE2 subfamily.

The protein localises to the cytoplasm. The enzyme catalyses DNA(n) + a 2'-deoxyribonucleoside 5'-triphosphate = DNA(n+1) + diphosphate. Its function is as follows. DNA polymerase involved in damage-induced mutagenesis and translesion synthesis (TLS). It is not the major replicative DNA polymerase. The polypeptide is Error-prone DNA polymerase (Hahella chejuensis (strain KCTC 2396)).